A 113-amino-acid chain; its full sequence is uncharacterized protein (113 aa).

This is an uncharacterized protein from Escherichia coli (strain K12).